A 229-amino-acid chain; its full sequence is Putative N-acetylmannosamine-6-phosphate 2-epimerase (229 aa).

It belongs to the NanE family.

It carries out the reaction an N-acyl-D-glucosamine 6-phosphate = an N-acyl-D-mannosamine 6-phosphate. It functions in the pathway amino-sugar metabolism; N-acetylneuraminate degradation; D-fructose 6-phosphate from N-acetylneuraminate: step 3/5. Functionally, converts N-acetylmannosamine-6-phosphate (ManNAc-6-P) to N-acetylglucosamine-6-phosphate (GlcNAc-6-P). This chain is Putative N-acetylmannosamine-6-phosphate 2-epimerase, found in Escherichia coli O8 (strain IAI1).